The sequence spans 273 residues: SPRY domain-containing SOCS box protein 1 (273 aa).

Tyr31 carries the phosphotyrosine modification. Residues 33 to 231 enclose the B30.2/SPRY domain; that stretch reads KPTRLDLLLD…IRMRYLNGLD (199 aa). The SOCS box domain maps to 232-273; that stretch reads PEPLPLMDLCRRSVRLALGKERLGAIPALPLPASLKAYLLYQ.

The protein belongs to the SPSB family. In terms of assembly, component of the probable ECS(SPSB1) E3 ubiquitin-protein ligase complex which contains CUL5, RNF7/RBX2, Elongin BC complex and SPSB1. Interacts with CUL5, RNF7, ELOB and ELOC. Directly interacts with MET tyrosine kinase domain in the presence and in the absence of HGF, however HGF treatment has a positive effect on this interaction. When phosphorylated, interacts with RASA1 without affecting its stability. Interacts (via B30.2/SPRY domain) with PAWR; this interaction is direct and occurs in association with the Elongin BC complex. Interacts with EPHB2. Interacts with NOS2.

It is found in the cytoplasm. It localises to the cytosol. It functions in the pathway protein modification; protein ubiquitination. Its function is as follows. Substrate recognition component of a SCF-like ECS (Elongin BC-CUL2/5-SOCS-box protein) E3 ubiquitin-protein ligase complex which mediates the ubiquitination and subsequent proteasomal degradation of target proteins. Negatively regulates nitric oxide (NO) production and limits cellular toxicity in activated macrophages by mediating the ubiquitination and proteasomal degradation of NOS2. Acts as a bridge which links the NOS2 with the ECS E3 ubiquitin ligase complex components ELOC and CUL5. The protein is SPRY domain-containing SOCS box protein 1 (Spsb1) of Mus musculus (Mouse).